The sequence spans 329 residues: Methionyl-tRNA formyltransferase (329 aa).

A (6S)-5,6,7,8-tetrahydrofolate-binding site is contributed by 118 to 121 (SLLP).

The protein belongs to the Fmt family.

It catalyses the reaction L-methionyl-tRNA(fMet) + (6R)-10-formyltetrahydrofolate = N-formyl-L-methionyl-tRNA(fMet) + (6S)-5,6,7,8-tetrahydrofolate + H(+). Functionally, attaches a formyl group to the free amino group of methionyl-tRNA(fMet). The formyl group appears to play a dual role in the initiator identity of N-formylmethionyl-tRNA by promoting its recognition by IF2 and preventing the misappropriation of this tRNA by the elongation apparatus. This chain is Methionyl-tRNA formyltransferase, found in Corynebacterium urealyticum (strain ATCC 43042 / DSM 7109).